The primary structure comprises 303 residues: Hemolysin E (303 aa).

A disulfide bond links Cys87 and Cys285. The chain crosses the membrane as a helical span at residues Ala183–Val203.

The protein belongs to the hemolysin E family. As to quaternary structure, monomer and oligomer. In periplasm, it is present as a monomer, while in outer membrane vesicles, it oligomerizes to form a pore structure that is active. The pore is formed by a dodecamer. In periplasm, it forms a disulfide bond, which prevents the oligomerization. In outer membrane vesicles, the redox status prevents formation of the disulfide bond, leading to oligomerization and pore formation.

It localises to the secreted. The protein localises to the periplasm. The protein resides in the host cell membrane. In terms of biological role, toxin, which has some hemolytic activity towards mammalian cells. Acts by forming a pore-like structure upon contact with mammalian cells. The protein is Hemolysin E (hlyE) of Escherichia coli O157:H7.